Reading from the N-terminus, the 149-residue chain is 3-dehydroquinate dehydratase (149 aa).

Tyrosine 26 serves as the catalytic Proton acceptor. Positions 78, 84, and 91 each coordinate substrate. Histidine 104 serves as the catalytic Proton donor. Residues leucine 105 to serine 106 and arginine 115 each bind substrate.

Belongs to the type-II 3-dehydroquinase family. In terms of assembly, homododecamer.

The catalysed reaction is 3-dehydroquinate = 3-dehydroshikimate + H2O. The protein operates within metabolic intermediate biosynthesis; chorismate biosynthesis; chorismate from D-erythrose 4-phosphate and phosphoenolpyruvate: step 3/7. In terms of biological role, catalyzes a trans-dehydration via an enolate intermediate. The polypeptide is 3-dehydroquinate dehydratase (Polynucleobacter asymbioticus (strain DSM 18221 / CIP 109841 / QLW-P1DMWA-1) (Polynucleobacter necessarius subsp. asymbioticus)).